A 153-amino-acid chain; its full sequence is DNA gyrase inhibitor (153 aa).

Belongs to the DNA gyrase inhibitor family. Interacts with DNA gyrase.

It localises to the cytoplasm. Inhibits the supercoiling activity of DNA gyrase. Acts by inhibiting DNA gyrase at an early step, prior to (or at the step of) binding of DNA by the gyrase. It protects cells against toxins that target DNA gyrase, by inhibiting activity of these toxins and reducing the formation of lethal double-strand breaks in the cell. This is DNA gyrase inhibitor from Pantoea sp. (strain At-9b).